The chain runs to 71 residues: UPF0352 protein Asuc_0778 (71 aa).

This sequence belongs to the UPF0352 family.

In Actinobacillus succinogenes (strain ATCC 55618 / DSM 22257 / CCUG 43843 / 130Z), this protein is UPF0352 protein Asuc_0778.